We begin with the raw amino-acid sequence, 210 residues long: MSSAQNIKKSIMAPVLDNNPIALQVLGVCSALAVTTKLETAFVMTLAVTFVTALSNFSVSLIRNHIPNSVRIIVQMAIIASLVIVVDQVLKAYLYDISKQLSVFVGLIITNCIVMGRAEAFAMKSAPVPSLIDGIGNGLGYGFVLITVGFFRELFGSGKLFGMEVLPLVSNGGWYQPNGLMLLAPSAFFLIGFLIWVIRVFKPEQVEAKE.

Transmembrane regions (helical) follow at residues 42–62, 72–92, 103–123, 131–151, and 178–198; these read FVMTLAVTFVTALSNFSVSLI, IIVQMAIIASLVIVVDQVLKA, VFVGLIITNCIVMGRAEAFAM, LIDGIGNGLGYGFVLITVGFF, and NGLMLLAPSAFFLIGFLIWVI.

The protein belongs to the NqrDE/RnfAE family. In terms of assembly, composed of six subunits; NqrA, NqrB, NqrC, NqrD, NqrE and NqrF.

Its subcellular location is the cell inner membrane. The enzyme catalyses a ubiquinone + n Na(+)(in) + NADH + H(+) = a ubiquinol + n Na(+)(out) + NAD(+). In terms of biological role, NQR complex catalyzes the reduction of ubiquinone-1 to ubiquinol by two successive reactions, coupled with the transport of Na(+) ions from the cytoplasm to the periplasm. NqrA to NqrE are probably involved in the second step, the conversion of ubisemiquinone to ubiquinol. In Vibrio parahaemolyticus serotype O3:K6 (strain RIMD 2210633), this protein is Na(+)-translocating NADH-quinone reductase subunit D.